The sequence spans 134 residues: Small ribosomal subunit protein uS8 (134 aa).

This sequence belongs to the universal ribosomal protein uS8 family. As to quaternary structure, part of the 30S ribosomal subunit. Contacts proteins S5 and S12.

Functionally, one of the primary rRNA binding proteins, it binds directly to 16S rRNA central domain where it helps coordinate assembly of the platform of the 30S subunit. The protein is Small ribosomal subunit protein uS8 of Fervidobacterium nodosum (strain ATCC 35602 / DSM 5306 / Rt17-B1).